We begin with the raw amino-acid sequence, 527 residues long: Monooxygenase aurF (527 aa).

An N-terminal signal peptide occupies residues 1–19 (MPNPTVAIVGLGALGLVTL). N59 is a glycosylation site (N-linked (GlcNAc...) asparagine).

It belongs to the FMO family. In terms of assembly, might be part of an extracellular enzyme complex composed of GIP1, aurF, aurO and aurS. FAD is required as a cofactor.

The protein localises to the secreted. It is found in the extracellular space. It functions in the pathway pigment biosynthesis. In terms of biological role, monooxygenase; part of the gene cluster that mediates the biosynthesis of aurofusarin, a red mycelium pigment which is acting as a mycotoxin. The first step is performed by the polyketide synthase which condenses one acetyl-CoA and 6 malonyl-CoA units to form the first intermediate, the cyclic heptaketide and yellow pigment YWA1. The C2 hydroxyl group in the pyrone ring of YWA1 is probably formed during ring closure by an aldol-type cyclization reaction. The dehydratase aurZ then acts as the first tailoring enzyme in the aurofusarin biosynthetic pathway by converting YWA1 to nor-rubrofusarin. Nor-rubrofusarin is then methylated to rubrofusarin by the O-methyltransferase aurJ. Rubrofusarin is then transported across the plasma membrane by the rubrofusarin-specific pump aurT for further enzymatic processing by the extracellular complex composed of GIP1, aurF, aurO and aurS to yield aurofusarin. This is Monooxygenase aurF from Gibberella zeae (strain ATCC MYA-4620 / CBS 123657 / FGSC 9075 / NRRL 31084 / PH-1) (Wheat head blight fungus).